Here is a 916-residue protein sequence, read N- to C-terminus: DNA gyrase subunit A (916 aa).

The region spanning 42–544 (LPDVRDGLKP…FGGDIADEDL (503 aa)) is the Topo IIA-type catalytic domain. The active-site O-(5'-phospho-DNA)-tyrosine intermediate is Tyr130. The GyrA-box motif lies at 571–577 (QRRGGRG). A compositionally biased stretch (acidic residues) spans 739–748 (SDDLEDETAD). 2 disordered regions span residues 739–774 (SDDL…RGMR) and 897–916 (ESEL…EAEN).

Belongs to the type II topoisomerase GyrA/ParC subunit family. In terms of assembly, heterotetramer, composed of two GyrA and two GyrB chains. In the heterotetramer, GyrA contains the active site tyrosine that forms a transient covalent intermediate with DNA, while GyrB binds cofactors and catalyzes ATP hydrolysis.

It localises to the cytoplasm. It carries out the reaction ATP-dependent breakage, passage and rejoining of double-stranded DNA.. In terms of biological role, a type II topoisomerase that negatively supercoils closed circular double-stranded (ds) DNA in an ATP-dependent manner to modulate DNA topology and maintain chromosomes in an underwound state. Negative supercoiling favors strand separation, and DNA replication, transcription, recombination and repair, all of which involve strand separation. Also able to catalyze the interconversion of other topological isomers of dsDNA rings, including catenanes and knotted rings. Type II topoisomerases break and join 2 DNA strands simultaneously in an ATP-dependent manner. This Neisseria gonorrhoeae protein is DNA gyrase subunit A.